The primary structure comprises 361 residues: Queuine tRNA-ribosyltransferase (361 aa).

The active-site Proton acceptor is the D92. Residues 92–96, D146, Q189, and G216 each bind substrate; that span reads DSGGF. Residues 247–253 are RNA binding; the sequence is GVGKPAD. D266 serves as the catalytic Nucleophile. An RNA binding; important for wobble base 34 recognition region spans residues 271–275; the sequence is TRSGR. Residues C304, C306, C309, and H335 each contribute to the Zn(2+) site.

The protein belongs to the queuine tRNA-ribosyltransferase family. Homodimer. Within each dimer, one monomer is responsible for RNA recognition and catalysis, while the other monomer binds to the replacement base PreQ1. Requires Zn(2+) as cofactor.

It catalyses the reaction 7-aminomethyl-7-carbaguanine + guanosine(34) in tRNA = 7-aminomethyl-7-carbaguanosine(34) in tRNA + guanine. Its pathway is tRNA modification; tRNA-queuosine biosynthesis. Functionally, catalyzes the base-exchange of a guanine (G) residue with the queuine precursor 7-aminomethyl-7-deazaguanine (PreQ1) at position 34 (anticodon wobble position) in tRNAs with GU(N) anticodons (tRNA-Asp, -Asn, -His and -Tyr). Catalysis occurs through a double-displacement mechanism. The nucleophile active site attacks the C1' of nucleotide 34 to detach the guanine base from the RNA, forming a covalent enzyme-RNA intermediate. The proton acceptor active site deprotonates the incoming PreQ1, allowing a nucleophilic attack on the C1' of the ribose to form the product. After dissociation, two additional enzymatic reactions on the tRNA convert PreQ1 to queuine (Q), resulting in the hypermodified nucleoside queuosine (7-(((4,5-cis-dihydroxy-2-cyclopenten-1-yl)amino)methyl)-7-deazaguanosine). The sequence is that of Queuine tRNA-ribosyltransferase from Rickettsia rickettsii (strain Iowa).